A 572-amino-acid chain; its full sequence is Proline--tRNA ligase (572 aa).

The protein belongs to the class-II aminoacyl-tRNA synthetase family. ProS type 1 subfamily. In terms of assembly, homodimer.

The protein localises to the cytoplasm. The enzyme catalyses tRNA(Pro) + L-proline + ATP = L-prolyl-tRNA(Pro) + AMP + diphosphate. Its function is as follows. Catalyzes the attachment of proline to tRNA(Pro) in a two-step reaction: proline is first activated by ATP to form Pro-AMP and then transferred to the acceptor end of tRNA(Pro). As ProRS can inadvertently accommodate and process non-cognate amino acids such as alanine and cysteine, to avoid such errors it has two additional distinct editing activities against alanine. One activity is designated as 'pretransfer' editing and involves the tRNA(Pro)-independent hydrolysis of activated Ala-AMP. The other activity is designated 'posttransfer' editing and involves deacylation of mischarged Ala-tRNA(Pro). The misacylated Cys-tRNA(Pro) is not edited by ProRS. This Escherichia fergusonii (strain ATCC 35469 / DSM 13698 / CCUG 18766 / IAM 14443 / JCM 21226 / LMG 7866 / NBRC 102419 / NCTC 12128 / CDC 0568-73) protein is Proline--tRNA ligase.